Here is a 577-residue protein sequence, read N- to C-terminus: MSGREQTGEKLSDSEYIEEEPRRSRIGNLKKKAFSCSTKLTHPLKMRKGKRKIDFQIPLIEDVRDEKEEKLVSKLRQQLLQKDLLPPVHDDYHMLLRFLKTMEFKIEKTVTAWEEMLKWRKEFGTDRIIQDFNFKELDEVTRHYPQGYHGVDKDGRPIYIERLGKAHPGKLMEVTTIERYLKYHVQEFERTLQEKLPACSVAAKRRVTTTTTILDVEGLGMKNFTPTAANLLATIAKVDCNYYPETLHRMFIVNAGIGFRSFLWPAAQKLLDPMTIAKIQVLEPRSLSKLLEAIDSSQLPEFLGGLCKCPNEGGCLRSNKGPWNDPEIVELVHHMEVNNVPQTTTAPLHVRDYDSTTCTISPKETLKEEPEPEEYYSSTGSRSSMHTCIVPPLSDKASTSDGDKFITTVESIESAQSQLLDADTENTFANTSVREGGQILRFGALREKINSENIFHLVKILLVFPLKLFVLFGFLLPGYWQRQNTVVVPDSSTNNKVLECFDRLKKMEKEFTEISRKQVKIPEANEKLLAESLERIKSLELDLDKTKSVLHITLTKQLQITEQLESQDEERRKGCCF.

Positions 1 to 22 (MSGREQTGEKLSDSEYIEEEPR) are disordered. The 176-residue stretch at 136-311 (ELDEVTRHYP…FLGGLCKCPN (176 aa)) folds into the CRAL-TRIO domain. The segment at 364–383 (ETLKEEPEPEEYYSSTGSRS) is disordered. Positions 523 to 550 (EANEKLLAESLERIKSLELDLDKTKSVL) form a coiled coil.

This sequence belongs to the SFH family.

The protein localises to the golgi apparatus membrane. The protein resides in the cell membrane. Required for transport of secretory proteins from the Golgi complex. Catalyzes the transfer of phosphatidylinositol and phosphatidylcholine between membranes in vitro. The sequence is that of Phosphatidylinositol/phosphatidylcholine transfer protein SFH14 (SFH14) from Arabidopsis thaliana (Mouse-ear cress).